Here is a 136-residue protein sequence, read N- to C-terminus: S-protein homolog 17 (136 aa).

The first 22 residues, methionine 1–alanine 22, serve as a signal peptide directing secretion.

The protein belongs to the plant self-incompatibility (S1) protein family.

The protein localises to the secreted. The sequence is that of S-protein homolog 17 from Arabidopsis thaliana (Mouse-ear cress).